A 345-amino-acid polypeptide reads, in one-letter code: Fe(3+) ions import ATP-binding protein FbpC (345 aa).

In terms of domain architecture, ABC transporter spans 3–233 (LSLKAATVRF…PADEFVARFL (231 aa)). Residue 35 to 42 (GPSGSGKS) coordinates ATP.

Belongs to the ABC transporter superfamily. Fe(3+) ion importer (TC 3.A.1.10) family. In terms of assembly, the complex is composed of two ATP-binding proteins (FbpC), two transmembrane proteins (FbpB) and a solute-binding protein (FbpA).

It localises to the cell membrane. It carries out the reaction Fe(3+)(out) + ATP + H2O = Fe(3+)(in) + ADP + phosphate + H(+). Its function is as follows. Part of the ABC transporter complex FbpABC involved in Fe(3+) ions import. Responsible for energy coupling to the transport system. This chain is Fe(3+) ions import ATP-binding protein FbpC, found in Streptomyces avermitilis (strain ATCC 31267 / DSM 46492 / JCM 5070 / NBRC 14893 / NCIMB 12804 / NRRL 8165 / MA-4680).